A 461-amino-acid chain; its full sequence is UDP-N-acetylmuramate--L-alanine ligase (461 aa).

112-118 (GTHGKTT) lines the ATP pocket.

It belongs to the MurCDEF family.

It localises to the cytoplasm. It catalyses the reaction UDP-N-acetyl-alpha-D-muramate + L-alanine + ATP = UDP-N-acetyl-alpha-D-muramoyl-L-alanine + ADP + phosphate + H(+). The protein operates within cell wall biogenesis; peptidoglycan biosynthesis. Cell wall formation. In Geobacter sp. (strain M21), this protein is UDP-N-acetylmuramate--L-alanine ligase.